The primary structure comprises 316 residues: MANLFDQLKEFTTIVADTGDVEAIKSVKPYDATTNPSLLLKASTLPQYAPLIDEAIAYAKSQSGDKAQQIEDAADKLAVLIGQEILKHIPGKISTEVDARLSFDTDAMVQKGRKLIKLYADAGISKDRVLIKLASTWEGIKAGEILEKEGINCNLTLLFSFAQARACAEAGVFLISPFVGRILDWYKAKTGENYTSETDPGVLSVRKIYAYYKEHGYKTVVMGASFRNTGEITALAGCDRLTVSPNLLERAEGYRRYLPRVLVDNGATKQRPALLTEKEFRFDQNEDAMATEKLAEGIRGFVVDQNKLEKALAEKL.

Lys132 functions as the Schiff-base intermediate with substrate in the catalytic mechanism.

The protein belongs to the transaldolase family. Type 1 subfamily.

It localises to the cytoplasm. The enzyme catalyses D-sedoheptulose 7-phosphate + D-glyceraldehyde 3-phosphate = D-erythrose 4-phosphate + beta-D-fructose 6-phosphate. Its pathway is carbohydrate degradation; pentose phosphate pathway; D-glyceraldehyde 3-phosphate and beta-D-fructose 6-phosphate from D-ribose 5-phosphate and D-xylulose 5-phosphate (non-oxidative stage): step 2/3. Transaldolase is important for the balance of metabolites in the pentose-phosphate pathway. This chain is Transaldolase, found in Methylomonas aminofaciens.